The chain runs to 225 residues: tRNA (guanine-N(1)-)-methyltransferase (225 aa).

S-adenosyl-L-methionine contacts are provided by residues Gly-112 and 132 to 137 (IGDYVL).

The protein belongs to the RNA methyltransferase TrmD family. In terms of assembly, homodimer.

The protein resides in the cytoplasm. The enzyme catalyses guanosine(37) in tRNA + S-adenosyl-L-methionine = N(1)-methylguanosine(37) in tRNA + S-adenosyl-L-homocysteine + H(+). Functionally, specifically methylates guanosine-37 in various tRNAs. The protein is tRNA (guanine-N(1)-)-methyltransferase of Bacteroides fragilis (strain ATCC 25285 / DSM 2151 / CCUG 4856 / JCM 11019 / LMG 10263 / NCTC 9343 / Onslow / VPI 2553 / EN-2).